The sequence spans 481 residues: Phosphoglycerate kinase, chloroplastic (481 aa).

A chloroplast-targeting transit peptide spans 1 to 75; sequence MASATASHTL…SSKPIRGVAS (75 aa). The (2R)-3-phosphoglycerate site is built by alanine 98, aspartate 99, asparagine 101, arginine 115, serine 137, histidine 138, glycine 140, arginine 141, arginine 196, histidine 228, and arginine 229. Glycine 274 is an ADP binding site. Glycine 274 contributes to the CDP binding site. AMP is bound by residues lysine 276 and lysine 280. Lysine 280 lines the ATP pocket. Position 298 (glycine 298) interacts with ADP. Position 298 (glycine 298) interacts with CDP. 2 residues coordinate AMP: glycine 299 and glycine 371. 2 residues coordinate ATP: glycine 299 and glycine 371. Positions 396 and 401 each coordinate CDP. Residue phenylalanine 401 coordinates ADP. Glutamate 402 is an AMP binding site. Positions 402, 433, and 434 each coordinate ATP. Aspartate 433 contributes to the Mg(2+) binding site.

It belongs to the phosphoglycerate kinase family. As to quaternary structure, monomer. It depends on Mg(2+) as a cofactor.

The protein resides in the plastid. The protein localises to the chloroplast. It catalyses the reaction (2R)-3-phosphoglycerate + ATP = (2R)-3-phospho-glyceroyl phosphate + ADP. It participates in carbohydrate biosynthesis; Calvin cycle. This Nicotiana tabacum (Common tobacco) protein is Phosphoglycerate kinase, chloroplastic.